Here is a 475-residue protein sequence, read N- to C-terminus: MPVQHVKLARDRRKKRAYIKVGVFFVAILLILTGILLTIKSKPEENSIFSTFDSGEYHELNTSPNENSTALQPDENATSYDDELQAKDDEVDEVKLSSDDLDTLPQHAQDALNGLLDAADQAIRITDQFSYTVTEGDTLKDVLVLSGLDDSSVQPLIALDPELAHLKAGQQFYWILDKNDNLEYLNWLVSEKEERIYERLEDGKFKRQVIEKKSIWRKEVLKGEIQNSLNSSLREKGLDTRQISQLSNALQWQVSLRKLKKGTQFAILVSREYLGDKLTGQGNVEALRISSGGKNYYAVQAANGRYYNQQGETLGKGFARYPLQRQARVSSPFNPNRRHPVTGRIRPHKGVDFSVSQGTPVIAPADGTVEKVAYQAGGAGRYVMLRHGREYQTVYMHLSKSLVKAGQTVKKGERIALSGNTGISTGPHLHYEFHINGRAVNPLTVKLPGTSSGMTSAERKQFLVRVREAERMLKP.

Residues 19-39 (IKVGVFFVAILLILTGILLTI) traverse the membrane as a helical segment. Disordered stretches follow at residues 55 to 79 (GEYH…NATS) and 330 to 350 (SSPF…PHKG). The span at 60-79 (LNTSPNENSTALQPDENATS) shows a compositional bias: polar residues. Over residues 336–348 (NRRHPVTGRIRPH) the composition is skewed to basic residues. His348 lines the Zn(2+) pocket.

It in the central section; belongs to the OapA family. This sequence in the C-terminal section; belongs to the peptidase M23B family. Requires Zn(2+) as cofactor.

It is found in the cell membrane. This is an uncharacterized protein from Haemophilus influenzae (strain ATCC 51907 / DSM 11121 / KW20 / Rd).